Reading from the N-terminus, the 473-residue chain is Ras-GEF domain-containing family member 1B (473 aa).

In terms of domain architecture, N-terminal Ras-GEF spans 34–164; that stretch reads HDNNLLSGSL…QMMQCLIRKL (131 aa). Residues 204–452 enclose the Ras-GEF domain; sequence NDPYTLAQQL…LYLASYESEG (249 aa).

In terms of assembly, interacts with Ras family proteins. Interacts with CCDC124 during cytokinesis.

It is found in the early endosome. The protein localises to the late endosome. It localises to the midbody. In terms of biological role, guanine nucleotide exchange factor (GEF) with specificity for RAP2A, it doesn't seems to activate other Ras family proteins (in vitro). The sequence is that of Ras-GEF domain-containing family member 1B (RASGEF1B) from Homo sapiens (Human).